The primary structure comprises 416 residues: Calreticulin (416 aa).

The N-terminal stretch at Met1–Ala25 is a signal peptide. N-linked (GlcNAc...) asparagine glycosylation occurs at Asn57. An intrachain disulfide couples Cys111 to Cys143. An alpha-D-glucoside is bound by residues Tyr115, Lys117, Tyr134, and Asp141. Residue Asn157 is glycosylated (N-linked (GlcNAc...) asparagine). 7 consecutive repeat copies span residues Lys197–Leu208, Asp216–Asp227, Asp233–Asp244, Asp251–Asp262, Gly266–Pro276, Gly280–Pro290, and Gly294–Pro304. The tract at residues Lys197 to Asp262 is 4 X approximate repeats. Over residues Pro217 to Gly241 the composition is skewed to basic and acidic residues. A disordered region spans residues Pro217–Pro281. The interval Gly266–Pro304 is 3 X approximate repeats. Glu324 provides a ligand contact to an alpha-D-glucoside. The span at Glu351 to Pro381 shows a compositional bias: basic and acidic residues. Residues Glu351–Leu416 form a disordered region. The segment covering Val382 to Asp400 has biased composition (acidic residues). Over residues Asp401–Leu416 the composition is skewed to basic and acidic residues. The short motif at His413–Leu416 is the Prevents secretion from ER element.

Belongs to the calreticulin family.

The protein localises to the endoplasmic reticulum lumen. Molecular calcium-binding chaperone promoting folding, oligomeric assembly and quality control in the ER via the calreticulin/calnexin cycle. This lectin may interact transiently with almost all of the monoglucosylated glycoproteins that are synthesized in the ER. The polypeptide is Calreticulin (Beta vulgaris (Sugar beet)).